A 311-amino-acid chain; its full sequence is LOB domain-containing protein 10 (311 aa).

The 102-residue stretch at 4 to 105 folds into the LOB domain; it reads TPCAACKLLR…QDLLTAKEEL (102 aa). Positions 264–277 are enriched in low complexity; the sequence is LQEGQEQTEEGQFL. The interval 264–311 is disordered; sequence LQEGQEQTEEGQFLMQPMGQENLHDEEEEEELEPPVKWRMSENKEASF. Acidic residues predominate over residues 287-296; the sequence is HDEEEEEELE. Residues 297-311 show a composition bias toward basic and acidic residues; the sequence is PPVKWRMSENKEASF.

It belongs to the LOB domain-containing protein family.

The polypeptide is LOB domain-containing protein 10 (LBD10) (Arabidopsis thaliana (Mouse-ear cress)).